A 240-amino-acid polypeptide reads, in one-letter code: MKILLIGYGAMNQRVARLAEEKGHEIVGVIENTPKATTPYQQYQHIADVKDADVAIDFSNPNLLFPLLDEEFHLPLVVATTGEKEKLLNKLDELSQNIPVFFSANMSYGVHALTKILAAAVPLLDDFDIELTEAHHNKKVDAPSGTLEKLYDVIVSLKENVTPVYDRHELNEKRQPQDIGIHSIRGGTIVGEHEVLFAGTDETIQITHRAQSKDIFANGAIQAAERLVNKPNGFYTFDNL.

NAD(+)-binding positions include Ala-79 to Thr-81 and Ser-103 to Met-106. The active-site Proton donor/acceptor is the His-135. A (S)-2,3,4,5-tetrahydrodipicolinate-binding site is contributed by His-136. Lys-139 acts as the Proton donor in catalysis. Gly-145–Thr-146 is a binding site for (S)-2,3,4,5-tetrahydrodipicolinate.

Belongs to the DapB family.

Its subcellular location is the cytoplasm. It catalyses the reaction (S)-2,3,4,5-tetrahydrodipicolinate + NAD(+) + H2O = (2S,4S)-4-hydroxy-2,3,4,5-tetrahydrodipicolinate + NADH + H(+). It carries out the reaction (S)-2,3,4,5-tetrahydrodipicolinate + NADP(+) + H2O = (2S,4S)-4-hydroxy-2,3,4,5-tetrahydrodipicolinate + NADPH + H(+). It functions in the pathway amino-acid biosynthesis; L-lysine biosynthesis via DAP pathway; (S)-tetrahydrodipicolinate from L-aspartate: step 4/4. In terms of biological role, catalyzes the conversion of 4-hydroxy-tetrahydrodipicolinate (HTPA) to tetrahydrodipicolinate. The sequence is that of 4-hydroxy-tetrahydrodipicolinate reductase from Staphylococcus aureus (strain JH1).